A 482-amino-acid polypeptide reads, in one-letter code: tRNA sulfurtransferase (482 aa).

A THUMP domain is found at 61–165 (DVTLSVLTQT…NDKLNLIIAR (105 aa)). Residues 183–184 (LI), K265, G287, and Q296 contribute to the ATP site. A disulfide bridge connects residues C344 and C456. A Rhodanese domain is found at 404 to 482 (LGSDVVVLDI…GYKNVKVYRP (79 aa)). C456 acts as the Cysteine persulfide intermediate in catalysis.

The protein belongs to the ThiI family.

It is found in the cytoplasm. The enzyme catalyses [ThiI sulfur-carrier protein]-S-sulfanyl-L-cysteine + a uridine in tRNA + 2 reduced [2Fe-2S]-[ferredoxin] + ATP + H(+) = [ThiI sulfur-carrier protein]-L-cysteine + a 4-thiouridine in tRNA + 2 oxidized [2Fe-2S]-[ferredoxin] + AMP + diphosphate. It carries out the reaction [ThiS sulfur-carrier protein]-C-terminal Gly-Gly-AMP + S-sulfanyl-L-cysteinyl-[cysteine desulfurase] + AH2 = [ThiS sulfur-carrier protein]-C-terminal-Gly-aminoethanethioate + L-cysteinyl-[cysteine desulfurase] + A + AMP + 2 H(+). Its pathway is cofactor biosynthesis; thiamine diphosphate biosynthesis. Its function is as follows. Catalyzes the ATP-dependent transfer of a sulfur to tRNA to produce 4-thiouridine in position 8 of tRNAs, which functions as a near-UV photosensor. Also catalyzes the transfer of sulfur to the sulfur carrier protein ThiS, forming ThiS-thiocarboxylate. This is a step in the synthesis of thiazole, in the thiamine biosynthesis pathway. The sulfur is donated as persulfide by IscS. The sequence is that of tRNA sulfurtransferase from Aliivibrio fischeri (strain MJ11) (Vibrio fischeri).